The primary structure comprises 385 residues: Multicilin (385 aa).

Positions 1 to 130 (MQACGGGAAG…TVDDLISDSS (130 aa)) are necessary and sufficient for its degradation during the cell cycle. Residues 86-111 (SSLLGSDAPPGGDLAASQNHSHQTEA) form a disordered region. The tract at residues 131–385 (SMMSPTLASG…GGYKFRWVPS (255 aa)) is necessary and sufficient for proper nuclear localization. Positions 173–245 (PDVPPPEQYW…SVLDKLMITQ (73 aa)) are necessary and sufficient for interaction with GMNN and sufficient for homodimerization. The stretch at 179 to 227 (EQYWKEVADQNQRALGDALVENNQLHVTLTQKQEEIASLKERNVQLKEL) forms a coiled coil. Residues 294–319 (ALQSRDPKRPRLLPEPANTDTRPGNL) are disordered.

Belongs to the geminin family. In terms of assembly, heterodimer (via coiled-coil domain) with GMNN (via coiled-coil domain); targets GMNN to the nucleus. Can form homodimers (in vitro, via coiled-coil domain), but these are much less stable than the heterodimer formed with GMNN.

The protein resides in the nucleus. Its function is as follows. Transcription regulator specifically required for multiciliate cell differentiation. Acts in a multiprotein complex containing E2F4 and E2F5 that binds and activates genes required for centriole biogenesis. Required for the deuterosome-mediated acentriolar pathway. Plays a role in mitotic cell cycle progression by promoting cell cycle exit. Modulates GMNN activity by reducing its affinity for CDT1. This Homo sapiens (Human) protein is Multicilin.